Here is a 563-residue protein sequence, read N- to C-terminus: Arginine--tRNA ligase (563 aa).

A 'HIGH' region motif is present at residues 121–131 (PNIAKPFSIGH).

The protein belongs to the class-I aminoacyl-tRNA synthetase family. As to quaternary structure, monomer.

It is found in the cytoplasm. The enzyme catalyses tRNA(Arg) + L-arginine + ATP = L-arginyl-tRNA(Arg) + AMP + diphosphate. This is Arginine--tRNA ligase from Streptococcus pneumoniae serotype 19F (strain G54).